Here is a 1071-residue protein sequence, read N- to C-terminus: ATP-dependent helicase/deoxyribonuclease subunit B (1071 aa).

This sequence belongs to the helicase family. AddB/RexB type 2 subfamily. As to quaternary structure, heterodimer of AddA and RexB. Requires Mg(2+) as cofactor.

The heterodimer acts as both an ATP-dependent DNA helicase and an ATP-dependent, dual-direction single-stranded exonuclease. Recognizes the chi site generating a DNA molecule suitable for the initiation of homologous recombination. This subunit has 5' -&gt; 3' nuclease activity but not helicase activity. In Streptococcus pyogenes serotype M12 (strain MGAS9429), this protein is ATP-dependent helicase/deoxyribonuclease subunit B.